A 412-amino-acid chain; its full sequence is Multidrug resistance protein MdtG (412 aa).

11 helical membrane passes run 19–39 (LGCF…PLYV), 56–76 (LVFS…GGLA), 90–110 (LGMS…QFLL), 113–133 (ALLG…ATQI), 144–164 (TLST…GFLA), 171–191 (TVFF…LFLI), 222–242 (LFVT…ILTL), 254–274 (IAFI…MSAP), 288–308 (ILIV…FVQT), 317–337 (FLLG…LVYN), and 376–396 (AVFL…TLSL).

It belongs to the major facilitator superfamily. DHA1 family. MdtG (TC 2.A.1.2.20) subfamily.

It is found in the cell inner membrane. The chain is Multidrug resistance protein MdtG from Klebsiella pneumoniae (strain 342).